The following is a 112-amino-acid chain: Dolichyl-diphosphooligosaccharide--protein glycosyltransferase subunit DAD1 (112 aa).

Topologically, residues M1–D27 are cytoplasmic. The helical transmembrane segment at I28–G48 threads the bilayer. Residues T49–P51 lie on the Lumenal side of the membrane. A helical membrane pass occupies residues F52–L72. At R73 to R91 the chain is on the cytoplasmic side. Residues G92–G112 traverse the membrane as a helical segment.

This sequence belongs to the DAD/OST2 family. As to quaternary structure, component of the oligosaccharyltransferase (OST) complex.

The protein localises to the endoplasmic reticulum membrane. It functions in the pathway protein modification; protein glycosylation. Subunit of the oligosaccharyl transferase (OST) complex that catalyzes the initial transfer of a defined glycan (Glc(3)Man(9)GlcNAc(2) in eukaryotes) from the lipid carrier dolichol-pyrophosphate to an asparagine residue within an Asn-X-Ser/Thr consensus motif in nascent polypeptide chains, the first step in protein N-glycosylation. N-glycosylation occurs cotranslationally and the complex associates with the Sec61 complex at the channel-forming translocon complex that mediates protein translocation across the endoplasmic reticulum (ER). All subunits are required for a maximal enzyme activity. Probably as part of the N-glycosylation pathway, plays a role in the regulation of tissue growth and apoptosis. This Drosophila melanogaster (Fruit fly) protein is Dolichyl-diphosphooligosaccharide--protein glycosyltransferase subunit DAD1.